The primary structure comprises 539 residues: Chaperonin GroEL (539 aa).

ATP contacts are provided by residues 29–32 (TLGP), 86–90 (DGTTT), G413, 476–478 (NAA), and D492.

This sequence belongs to the chaperonin (HSP60) family. In terms of assembly, forms a cylinder of 14 subunits composed of two heptameric rings stacked back-to-back. Interacts with the co-chaperonin GroES.

The protein resides in the cytoplasm. The catalysed reaction is ATP + H2O + a folded polypeptide = ADP + phosphate + an unfolded polypeptide.. Its function is as follows. Together with its co-chaperonin GroES, plays an essential role in assisting protein folding. The GroEL-GroES system forms a nano-cage that allows encapsulation of the non-native substrate proteins and provides a physical environment optimized to promote and accelerate protein folding. This is Chaperonin GroEL from Parageobacillus thermoglucosidasius (Geobacillus thermoglucosidasius).